Here is a 258-residue protein sequence, read N- to C-terminus: Phosphatidylglycerol--prolipoprotein diacylglyceryl transferase (258 aa).

Transmembrane regions (helical) follow at residues 9-29, 53-73, 90-110, 117-139, 169-189, 198-218, and 230-250; these read ILIQ…ATGF, LLTY…TLIY, EGGL…WLFV, KFLW…IRLG, PVQL…LMLF, GFLF…IEYF, and LISV…VLML. Arginine 137 provides a ligand contact to a 1,2-diacyl-sn-glycero-3-phospho-(1'-sn-glycerol).

The protein belongs to the Lgt family.

The protein localises to the cell inner membrane. The catalysed reaction is L-cysteinyl-[prolipoprotein] + a 1,2-diacyl-sn-glycero-3-phospho-(1'-sn-glycerol) = an S-1,2-diacyl-sn-glyceryl-L-cysteinyl-[prolipoprotein] + sn-glycerol 1-phosphate + H(+). Its pathway is protein modification; lipoprotein biosynthesis (diacylglyceryl transfer). Its function is as follows. Catalyzes the transfer of the diacylglyceryl group from phosphatidylglycerol to the sulfhydryl group of the N-terminal cysteine of a prolipoprotein, the first step in the formation of mature lipoproteins. The chain is Phosphatidylglycerol--prolipoprotein diacylglyceryl transferase from Tolumonas auensis (strain DSM 9187 / NBRC 110442 / TA 4).